The primary structure comprises 182 residues: Orotate phosphoribosyltransferase (182 aa).

Residues R91, K92, K95, H97, and 117 to 125 contribute to the 5-phospho-alpha-D-ribose 1-diphosphate site; that span reads EDVTTTGGS. Orotate-binding residues include T121 and R149.

The protein belongs to the purine/pyrimidine phosphoribosyltransferase family. PyrE subfamily. Homodimer. Requires Mg(2+) as cofactor.

The catalysed reaction is orotidine 5'-phosphate + diphosphate = orotate + 5-phospho-alpha-D-ribose 1-diphosphate. Its pathway is pyrimidine metabolism; UMP biosynthesis via de novo pathway; UMP from orotate: step 1/2. Its function is as follows. Catalyzes the transfer of a ribosyl phosphate group from 5-phosphoribose 1-diphosphate to orotate, leading to the formation of orotidine monophosphate (OMP). In Pyrococcus furiosus (strain ATCC 43587 / DSM 3638 / JCM 8422 / Vc1), this protein is Orotate phosphoribosyltransferase.